The following is a 226-amino-acid chain: Putative ankyrin repeat protein RF_0939 (226 aa).

ANK repeat units lie at residues 56 to 86 (VSTT…NVNM), 91 to 120 (FKDT…AVNG), 125 to 154 (LLGP…AVDQ), and 157 to 194 (SGET…DTNA).

In Rickettsia felis (strain ATCC VR-1525 / URRWXCal2) (Rickettsia azadi), this protein is Putative ankyrin repeat protein RF_0939.